Consider the following 373-residue polypeptide: Carnosine N-methyltransferase (373 aa).

Residues Gln-110, Arg-113, Gly-154, Glu-175, Asp-242, Phe-243, and Cys-262 each contribute to the S-adenosyl-L-methionine site. Asp-266 provides a ligand contact to carnosine. Residue Tyr-274 coordinates S-adenosyl-L-methionine. Positions 297 and 356 each coordinate carnosine.

Belongs to the carnosine N-methyltransferase family.

It is found in the cytoplasm. The protein localises to the nucleus. The enzyme catalyses carnosine + S-adenosyl-L-methionine = anserine + S-adenosyl-L-homocysteine + H(+). N-methyltransferase that mediates the formation of anserine (beta-alanyl-N(Pi)-methyl-L-histidine) from carnosine. Also methylates other L-histidine-containing di- and tripeptides such as Gly-Gly-His, Gly-His and homocarnosine (GABA-His). The sequence is that of Carnosine N-methyltransferase from Schizosaccharomyces pombe (strain 972 / ATCC 24843) (Fission yeast).